The sequence spans 385 residues: UPF0764 protein C16orf89 homolog (385 aa).

The signal sequence occupies residues 1 to 20 (MARLGLLLLLLLALPPHFSS). The disordered stretch occupies residues 344-385 (AHPEYYPNHGDPYSSSQSPASNYQDGAAGPDVQRTGRPLSVS). Polar residues predominate over residues 356 to 367 (YSSSQSPASNYQ).

It belongs to the UPF0764 family. Homodimer. Post-translationally, glycosylated. Predominantly expressed in thyroid tissue.

It is found in the secreted. The sequence is that of UPF0764 protein C16orf89 homolog from Mus musculus (Mouse).